Here is a 275-residue protein sequence, read N- to C-terminus: Putative phosphoenolpyruvate synthase regulatory protein (275 aa).

G153–T160 is a binding site for ADP.

This sequence belongs to the pyruvate, phosphate/water dikinase regulatory protein family. PSRP subfamily.

The catalysed reaction is [pyruvate, water dikinase] + ADP = [pyruvate, water dikinase]-phosphate + AMP + H(+). It carries out the reaction [pyruvate, water dikinase]-phosphate + phosphate + H(+) = [pyruvate, water dikinase] + diphosphate. Bifunctional serine/threonine kinase and phosphorylase involved in the regulation of the phosphoenolpyruvate synthase (PEPS) by catalyzing its phosphorylation/dephosphorylation. The sequence is that of Putative phosphoenolpyruvate synthase regulatory protein from Nitrosomonas europaea (strain ATCC 19718 / CIP 103999 / KCTC 2705 / NBRC 14298).